A 232-amino-acid polypeptide reads, in one-letter code: Platelet-activating factor acetylhydrolase IB subunit alpha1 (232 aa).

Residue serine 2 is modified to N-acetylserine. Phosphoserine is present on serine 2. Active-site residues include serine 47, aspartate 192, and histidine 195.

Belongs to the 'GDSL' lipolytic enzyme family. Platelet-activating factor acetylhydrolase IB beta/gamma subunits subfamily. Forms a catalytic dimer which is either homodimer (alpha1/alpha1 homodimer) or heterodimer with PAFAH1B2 (alpha1/alpha2 heterodimer). Component of the cytosolic (PAF-AH (I)) heterotetrameric enzyme, which is composed of PAFAH1B1 (beta), PAFAH1B2 (alpha2) and PAFAH1B3 (alpha1) subunits. The catalytic activity of the enzyme resides in the alpha1 (PAFAH1B3) and alpha2 (PAFAH1B2) subunits, whereas the beta subunit (PAFAH1B1) has regulatory activity. Trimer formation is not essential for the catalytic activity. Interacts with VLDLR; this interaction may modulate the Reelin pathway.

The protein localises to the cytoplasm. The enzyme catalyses a 1-O-alkyl-2-acetyl-sn-glycero-3-phosphocholine + H2O = a 1-O-alkyl-sn-glycero-3-phosphocholine + acetate + H(+). The catalysed reaction is 1-O-hexadecyl-2-acetyl-sn-glycero-3-phosphocholine + H2O = 1-O-hexadecyl-sn-glycero-3-phosphocholine + acetate + H(+). It catalyses the reaction 1-O-hexadecyl-2-acetyl-sn-glycero-3-phosphate + H2O = 1-O-hexadecyl-sn-glycero-3-phosphate + acetate + H(+). Its activity is regulated as follows. Beta subunit (PAFAH1B1) inhibits the acetylhydrolase activity of the alpha1/alpha1 catalytic homodimer. Its function is as follows. Alpha1 catalytic subunit of the cytosolic type I platelet-activating factor (PAF) acetylhydrolase (PAF-AH (I)) heterotetrameric enzyme that catalyzes the hydrolyze of the acetyl group at the sn-2 position of PAF and its analogs and modulates the action of PAF. The activity and substrate specificity of PAF-AH (I) are affected by its subunit composition. Both alpha1/alpha1 homodimer (PAFAH1B3/PAFAH1B3 homodimer) and alpha1/alpha2 heterodimer(PAFAH1B3/PAFAH1B2 heterodimer) hydrolyze 1-O-alkyl-2-acetyl-sn-glycero-3-phosphoric acid (AAGPA) more efficiently than PAF, but they have little hydrolytic activity towards 1-O-alkyl-2-acetyl-sn-glycero-3-phosphorylethanolamine (AAGPE). Plays an important role during the development of brain. This chain is Platelet-activating factor acetylhydrolase IB subunit alpha1, found in Bos taurus (Bovine).